The chain runs to 749 residues: Sentrin-specific protease 5 (749 aa).

A compositionally biased stretch (basic and acidic residues) spans 268-279 (TGDHQENLRDNN). Disordered stretches follow at residues 268–288 (TGDH…CNPV) and 394–440 (QESG…EEDG). Residues 557 to 718 (FYNKHMLDMD…VFVLQYCKCL (162 aa)) form a protease region. Catalysis depends on residues His-640, Asp-657, and Cys-707.

The protein belongs to the peptidase C48 family. Interacts with CCAR2.

It localises to the nucleus. It is found in the nucleolus. Functionally, protease that catalyzes two essential functions in the SUMO pathway: processing of full-length SUMO3 to its mature form and deconjugation of SUMO2 and SUMO3 from targeted proteins. Has weak proteolytic activity against full-length SUMO1 or SUMO1 conjugates. Required for cell division. The chain is Sentrin-specific protease 5 (Senp5) from Mus musculus (Mouse).